We begin with the raw amino-acid sequence, 621 residues long: ATP-dependent lipid A-core flippase (621 aa).

A run of 5 helical transmembrane segments spans residues 32–52 (IVAALIAIFGVAATESYLAAF), 91–111 (VWGTENKIWTVPLFLIILVVI), 192–212 (IVLLYLNWQLSLIVVLMFPLL), 286–306 (SPFSELIASIALAVVIFIALW), and 312–332 (YTTIGEFMAFIVAMLQMYAPI). The ABC transmembrane type-1 domain occupies 33-344 (VAALIAIFGV…LANISIPMQT (312 aa)). The ABC transporter domain maps to 378–611 (FRNVDVEYRS…NGYYTMLRNI (234 aa)). Residue 410–417 (GRSGSGKS) participates in ATP binding.

It belongs to the ABC transporter superfamily. Lipid exporter (TC 3.A.1.106) family. As to quaternary structure, homodimer.

The protein resides in the cell inner membrane. It carries out the reaction ATP + H2O + lipid A-core oligosaccharideSide 1 = ADP + phosphate + lipid A-core oligosaccharideSide 2.. Involved in lipopolysaccharide (LPS) biosynthesis. Translocates lipid A-core from the inner to the outer leaflet of the inner membrane. Transmembrane domains (TMD) form a pore in the inner membrane and the ATP-binding domain (NBD) is responsible for energy generation. The polypeptide is ATP-dependent lipid A-core flippase (Neisseria meningitidis serogroup A / serotype 4A (strain DSM 15465 / Z2491)).